The following is a 449-amino-acid chain: Glutamate--tRNA ligase 1 (449 aa).

The short motif at 11–21 (PSPTGSLHVGN) is the 'HIGH' region element. The 'KMSKS' region motif lies at 242–246 (PLSKR). K245 provides a ligand contact to ATP.

This sequence belongs to the class-I aminoacyl-tRNA synthetase family. Glutamate--tRNA ligase type 1 subfamily. As to quaternary structure, monomer.

The protein localises to the cytoplasm. The enzyme catalyses tRNA(Glu) + L-glutamate + ATP = L-glutamyl-tRNA(Glu) + AMP + diphosphate. Its function is as follows. Catalyzes the attachment of glutamate to tRNA(Glu) in a two-step reaction: glutamate is first activated by ATP to form Glu-AMP and then transferred to the acceptor end of tRNA(Glu). This Parvibaculum lavamentivorans (strain DS-1 / DSM 13023 / NCIMB 13966) protein is Glutamate--tRNA ligase 1.